The chain runs to 250 residues: Proteasome subunit alpha type-7-like (250 aa).

The O-linked (GlcNAc) serine glycan is linked to Ser132.

Belongs to the peptidase T1A family. In terms of assembly, the 26S proteasome consists of a 20S proteasome core and two 19S regulatory subunits. The 20S proteasome core is a barrel-shaped complex made of 28 subunits that are arranged in four stacked rings. The two outer rings are each formed by seven alpha subunits, and the two inner rings are formed by seven beta subunits. The proteolytic activity is exerted by three beta-subunits PSMB5, PSMB6 and PSMB7. PSMA7 interacts directly with the PSMG1-PSMG2 heterodimer which promotes 20S proteasome assembly. Interacts with HIF1A. Interacts with RAB7A. Interacts with PRKN. Interacts with ABL1 and ABL2. Interacts with EMAP2. Interacts with MAVS.

Its subcellular location is the cytoplasm. The protein resides in the nucleus. In terms of biological role, component of the 20S core proteasome complex involved in the proteolytic degradation of most intracellular proteins. This complex plays numerous essential roles within the cell by associating with different regulatory particles. Associated with two 19S regulatory particles, forms the 26S proteasome and thus participates in the ATP-dependent degradation of ubiquitinated proteins. The 26S proteasome plays a key role in the maintenance of protein homeostasis by removing misfolded or damaged proteins that could impair cellular functions, and by removing proteins whose functions are no longer required. Associated with the PA200 or PA28, the 20S proteasome mediates ubiquitin-independent protein degradation. This type of proteolysis is required in several pathways including spermatogenesis (20S-PA200 complex) or generation of a subset of MHC class I-presented antigenic peptides (20S-PA28 complex). Inhibits the transactivation function of HIF-1A under both normoxic and hypoxia-mimicking conditions. The interaction with EMAP2 increases the proteasome-mediated HIF-1A degradation under the hypoxic conditions. Plays a role in hepatitis C virus internal ribosome entry site-mediated translation. Mediates nuclear translocation of the androgen receptor (AR) and thereby enhances androgen-mediated transactivation. Promotes MAVS degradation and thereby negatively regulates MAVS-mediated innate immune response. This chain is Proteasome subunit alpha type-7-like (PSMA7L), found in Macaca fascicularis (Crab-eating macaque).